We begin with the raw amino-acid sequence, 149 residues long: Macrodomain Ter protein (149 aa).

This sequence belongs to the MatP family. As to quaternary structure, homodimer.

The protein localises to the cytoplasm. In terms of biological role, required for spatial organization of the terminus region of the chromosome (Ter macrodomain) during the cell cycle. Prevents early segregation of duplicated Ter macrodomains during cell division. Binds specifically to matS, which is a 13 bp signature motif repeated within the Ter macrodomain. This Vibrio vulnificus (strain YJ016) protein is Macrodomain Ter protein.